The sequence spans 109 residues: Probable guanidinium efflux system subunit GdnC (109 aa).

4 helical membrane passes run 3-23, 26-46, 55-75, and 81-101; these read WGSVILAALFEIGWVMGLKHA, ALEWICTAAAVVMSFYILVKA, VYAVFTGLGTAGTVVCEIALF, and IAKLALIGVLLCGVIGLKLVT.

It belongs to the drug/metabolite transporter (DMT) superfamily. Small multidrug resistance (SMR) (TC 2.A.7.1) family. YkkC/YkkD subfamily. As to quaternary structure, the efflux pump is composed of GdnC and GdnD.

It localises to the cell membrane. Its function is as follows. Probably involved in guanidinium transport. This is Probable guanidinium efflux system subunit GdnC from Bacillus licheniformis (strain ATCC 14580 / DSM 13 / JCM 2505 / CCUG 7422 / NBRC 12200 / NCIMB 9375 / NCTC 10341 / NRRL NRS-1264 / Gibson 46).